The chain runs to 456 residues: MSKSIEKMISHLKNQGFVFQGSEIYGGLANSWDYGPLGCEVKNKLKKVWWDFFVKKNPLNVGLDSSIILNSKVWKASGHIDGFNDPLIDCKNCKSRWRADKLIEEFDSSINTGIMTSAQLEDYINQNNILCKKCQKKDFTQIRQFALMFKTNQGVLEDDSSIVYLRPETAQGIFINFKNVQRSMRKKLPFGIGQIGKSFRNEITPGNFIFRTREFEQMELEFFFDPSDQKDWFKYWLDQIELFLTKKICLDKSNYKIRENLKDELSHYALKTSDIEFNFPFGWGELWGISHRSDFDLKVHQNLSKEDLTVLKEENNQKVLANVIEPSVGVERLMLAIFWQAYTEEQLEENNSRTVLKLPYNLAPYQVAITPLSKQLNQNAHQLFLELLKDFDAVYDETGNIGKRYRRQDAIGTPFVITYDFQTLEDQKVTIRYRDTMKQERILISQLKDFLNSQFN.

The substrate site is built by Arg-98 and Glu-168. Residues Arg-200–Glu-202, Phe-210–Phe-215, Glu-285–Leu-286, and Gly-329–Arg-332 contribute to the ATP site. Phe-215 to Glu-219 is a binding site for substrate. A substrate-binding site is contributed by Glu-325–Gly-329.

It belongs to the class-II aminoacyl-tRNA synthetase family. In terms of assembly, homodimer.

It localises to the cytoplasm. It carries out the reaction tRNA(Gly) + glycine + ATP = glycyl-tRNA(Gly) + AMP + diphosphate. In terms of biological role, catalyzes the attachment of glycine to tRNA(Gly). The protein is Glycine--tRNA ligase of Mycoplasma mycoides subsp. mycoides SC (strain CCUG 32753 / NCTC 10114 / PG1).